Reading from the N-terminus, the 465-residue chain is Apolipoprotein N-acyltransferase (465 aa).

Transmembrane regions (helical) follow at residues 12-32 (AVLG…LSML), 49-69 (ALWG…LHPL), 80-100 (LPVA…LLLL), 122-142 (LLAL…LFWI), 161-181 (WLGS…LWQL), and 189-209 (CAWW…SLSP). The region spanning 221-448 (WQPAIPTREK…DAVAAAELQR (228 aa)) is the CN hydrolase domain. The Proton acceptor role is filled by glutamate 262. Lysine 312 is a catalytic residue. The active-site Nucleophile is the cysteine 360.

It belongs to the CN hydrolase family. Apolipoprotein N-acyltransferase subfamily.

The protein resides in the cell inner membrane. The enzyme catalyses N-terminal S-1,2-diacyl-sn-glyceryl-L-cysteinyl-[lipoprotein] + a glycerophospholipid = N-acyl-S-1,2-diacyl-sn-glyceryl-L-cysteinyl-[lipoprotein] + a 2-acyl-sn-glycero-3-phospholipid + H(+). The protein operates within protein modification; lipoprotein biosynthesis (N-acyl transfer). Catalyzes the phospholipid dependent N-acylation of the N-terminal cysteine of apolipoprotein, the last step in lipoprotein maturation. This chain is Apolipoprotein N-acyltransferase, found in Parasynechococcus marenigrum (strain WH8102).